Reading from the N-terminus, the 291-residue chain is Tyrosine recombinase XerD (291 aa).

Positions 1 to 82 (MEEGLIDRLL…ACKRLYIWME (82 aa)) constitute a Core-binding (CB) domain. The Tyr recombinase domain maps to 103-285 (NIPTLITEQQ…ANVWLQGVVK (183 aa)). Active-site residues include Arg-143, Lys-167, His-237, Arg-240, and His-263. Tyr-272 functions as the O-(3'-phospho-DNA)-tyrosine intermediate in the catalytic mechanism.

Belongs to the 'phage' integrase family. XerD subfamily. In terms of assembly, forms a cyclic heterotetrameric complex composed of two molecules of XerC and two molecules of XerD.

It is found in the cytoplasm. In terms of biological role, site-specific tyrosine recombinase, which acts by catalyzing the cutting and rejoining of the recombining DNA molecules. The XerC-XerD complex is essential to convert dimers of the bacterial chromosome into monomers to permit their segregation at cell division. It also contributes to the segregational stability of plasmids. This is Tyrosine recombinase XerD from Neisseria meningitidis serogroup B (strain ATCC BAA-335 / MC58).